The chain runs to 383 residues: Glycoprotein gp2 (383 aa).

An N-terminal signal peptide occupies residues 1–25 (MGFIYARKLLLCMAVSIYAIGSTTT). Residues 24 to 75 (TTTETTTSSSSTSGSGQSTSSGTTNSSSSPTTSPPTTSSSPPTSTHTSSPST) are compositionally biased toward low complexity. Positions 24 to 136 (TTTETTTSSS…RNNSIEIVPQ (113 aa)) are disordered. Asn-48 carries an N-linked (GlcNAc...) asparagine; by host glycan. Positions 81-91 (HAGHHRGRAGG) are enriched in basic residues. Asn-128 carries an N-linked (GlcNAc...) asparagine; by host glycan. A helical transmembrane segment spans residues 354–371 (LVAATTLTVTILCLLCCL).

The protein localises to the virion membrane. The glycoprotein gp2 from the avirulent strain Kentucky A (KyA) is probably non functional since this strain harbors an in-frame deletion of 1,242 nucleotides in gene 71. In Equus caballus (Horse), this protein is Glycoprotein gp2 (US4).